Here is a 90-residue protein sequence, read N- to C-terminus: Acylphosphatase (90 aa).

Residues 5–90 (SYLFNVKGKV…WQELTDFKMY (86 aa)) form the Acylphosphatase-like domain. Catalysis depends on residues Arg20 and Asn38.

It belongs to the acylphosphatase family.

The catalysed reaction is an acyl phosphate + H2O = a carboxylate + phosphate + H(+). The chain is Acylphosphatase (acyP) from Aliivibrio fischeri (strain ATCC 700601 / ES114) (Vibrio fischeri).